We begin with the raw amino-acid sequence, 287 residues long: tRNA uridine(34) hydroxylase (287 aa).

The region spanning 132–226 (EGRPVVMLDT…YFEEVGGAHY (95 aa)) is the Rhodanese domain. C186 (cysteine persulfide intermediate) is an active-site residue.

It belongs to the TrhO family.

The enzyme catalyses uridine(34) in tRNA + AH2 + O2 = 5-hydroxyuridine(34) in tRNA + A + H2O. Catalyzes oxygen-dependent 5-hydroxyuridine (ho5U) modification at position 34 in tRNAs. This chain is tRNA uridine(34) hydroxylase, found in Paraburkholderia xenovorans (strain LB400).